A 420-amino-acid polypeptide reads, in one-letter code: COP9 signalosome complex subunit 5 (420 aa).

Residues 73–208 (AALSALACMK…IGAFRTMPET (136 aa)) enclose the MPN domain. Zn(2+) contacts are provided by H154, H156, and D167. Positions 154–167 (HSHPGYGCWLSGID) match the JAMM motif motif.

It belongs to the peptidase M67A family. CSN5 subfamily. In terms of assembly, component of the COP9 signalosome (CSN) complex.

The protein resides in the cytoplasm. The protein localises to the nucleus. In terms of biological role, catalytic component of the COP9 signalosome (CSN) complex that acts as an regulator of the ubiquitin (Ubl) conjugation pathway by mediating the deneddylation of the cullin subunit of SCF-type E3 ubiquitin-protein ligase complexes. The CSN complex is involved in the regulation of the mating pheromone response. This Eremothecium gossypii (strain ATCC 10895 / CBS 109.51 / FGSC 9923 / NRRL Y-1056) (Yeast) protein is COP9 signalosome complex subunit 5 (RRI1).